Reading from the N-terminus, the 601-residue chain is A-type ATP synthase subunit A (601 aa).

An ATP-binding site is contributed by 236-243 (GPFGSGKT).

Belongs to the ATPase alpha/beta chains family. As to quaternary structure, has multiple subunits with at least A(3), B(3), C, D, E, F, H, I and proteolipid K(x).

It is found in the cell membrane. It catalyses the reaction ATP + H2O + 4 H(+)(in) = ADP + phosphate + 5 H(+)(out). Component of the A-type ATP synthase that produces ATP from ADP in the presence of a proton gradient across the membrane. The A chain is the catalytic subunit. This chain is A-type ATP synthase subunit A, found in Hyperthermus butylicus (strain DSM 5456 / JCM 9403 / PLM1-5).